The sequence spans 218 residues: 3-dehydroquinate dehydratase (218 aa).

3-dehydroquinate is bound by residues 29-31 (EFR) and arginine 56. Histidine 116 functions as the Proton donor/acceptor in the catalytic mechanism. The active-site Schiff-base intermediate with substrate is the lysine 142. 3-dehydroquinate is bound by residues arginine 180, serine 200, and glutamine 204.

Belongs to the type-I 3-dehydroquinase family. As to quaternary structure, homodimer.

The enzyme catalyses 3-dehydroquinate = 3-dehydroshikimate + H2O. It participates in metabolic intermediate biosynthesis; chorismate biosynthesis; chorismate from D-erythrose 4-phosphate and phosphoenolpyruvate: step 3/7. Its function is as follows. Involved in the third step of the chorismate pathway, which leads to the biosynthesis of aromatic amino acids. Catalyzes the cis-dehydration of 3-dehydroquinate (DHQ) and introduces the first double bond of the aromatic ring to yield 3-dehydroshikimate. The polypeptide is 3-dehydroquinate dehydratase (Methanococcus maripaludis (strain C6 / ATCC BAA-1332)).